A 148-amino-acid polypeptide reads, in one-letter code: Large ribosomal subunit protein bL9 (148 aa).

Belongs to the bacterial ribosomal protein bL9 family.

Functionally, binds to the 23S rRNA. This Bacillus cereus (strain B4264) protein is Large ribosomal subunit protein bL9.